The primary structure comprises 315 residues: Methionyl-tRNA formyltransferase (315 aa).

113–116 (SLLP) contacts (6S)-5,6,7,8-tetrahydrofolate.

It belongs to the Fmt family.

The enzyme catalyses L-methionyl-tRNA(fMet) + (6R)-10-formyltetrahydrofolate = N-formyl-L-methionyl-tRNA(fMet) + (6S)-5,6,7,8-tetrahydrofolate + H(+). Attaches a formyl group to the free amino group of methionyl-tRNA(fMet). The formyl group appears to play a dual role in the initiator identity of N-formylmethionyl-tRNA by promoting its recognition by IF2 and preventing the misappropriation of this tRNA by the elongation apparatus. The protein is Methionyl-tRNA formyltransferase of Salmonella enteritidis PT4 (strain P125109).